Consider the following 353-residue polypeptide: 3-dehydroquinate synthase (353 aa).

NAD(+) contacts are provided by residues 61 to 66, 119 to 120, Lys132, and Lys141; these read DGEEAK and TT. Glu174, His238, and His254 together coordinate Zn(2+).

This sequence belongs to the sugar phosphate cyclases superfamily. Dehydroquinate synthase family. Co(2+) is required as a cofactor. Zn(2+) serves as cofactor. Requires NAD(+) as cofactor.

The protein localises to the cytoplasm. It catalyses the reaction 7-phospho-2-dehydro-3-deoxy-D-arabino-heptonate = 3-dehydroquinate + phosphate. Its pathway is metabolic intermediate biosynthesis; chorismate biosynthesis; chorismate from D-erythrose 4-phosphate and phosphoenolpyruvate: step 2/7. Its function is as follows. Catalyzes the conversion of 3-deoxy-D-arabino-heptulosonate 7-phosphate (DAHP) to dehydroquinate (DHQ). The sequence is that of 3-dehydroquinate synthase from Sulfolobus acidocaldarius (strain ATCC 33909 / DSM 639 / JCM 8929 / NBRC 15157 / NCIMB 11770).